The chain runs to 707 residues: Polyribonucleotide nucleotidyltransferase (707 aa).

Residues Asp487 and Asp493 each coordinate Mg(2+). A KH domain is found at 554–613; sequence PKILTMNINPDKIRDVIGPSGKQINKIIEDTGVKIDIEQDGTIFISSTDESSNQKAKKII. Residues 623 to 691 form the S1 motif domain; it reads GQLYLGKVKR…KQGRVNLSRK (69 aa).

It belongs to the polyribonucleotide nucleotidyltransferase family. Mg(2+) serves as cofactor.

Its subcellular location is the cytoplasm. The enzyme catalyses RNA(n+1) + phosphate = RNA(n) + a ribonucleoside 5'-diphosphate. In terms of biological role, involved in mRNA degradation. Catalyzes the phosphorolysis of single-stranded polyribonucleotides processively in the 3'- to 5'-direction. The sequence is that of Polyribonucleotide nucleotidyltransferase from Bacillus velezensis (strain DSM 23117 / BGSC 10A6 / LMG 26770 / FZB42) (Bacillus amyloliquefaciens subsp. plantarum).